Here is a 167-residue protein sequence, read N- to C-terminus: Effector CFEM8 (167 aa).

Positions 1 to 17 are cleaved as a signal peptide; the sequence is MQFSIVVMAALASLASA. The CFEM domain occupies 18-112; the sequence is QSMDGIPTCA…TPAAAAPYPT (95 aa). 4 disulfide bridges follow: Cys26/Cys68, Cys30/Cys63, Cys40/Cys47, and Cys49/Cys85. Residue Asp44 coordinates heme. N-linked (GlcNAc...) asparagine glycans are attached at residues Asn117 and Asn135. Gly143 carries GPI-anchor amidated glycine lipidation. A propeptide spans 144–167 (removed in mature form); the sequence is SAPQNVAGGLAGIFGLVVAAAFAL.

It belongs to the RBT5 family.

The protein localises to the cell membrane. It is found in the secreted. It localises to the host nucleus. Its subcellular location is the host cell membrane. Functionally, appears to function during host infection, and may play a role in suppressing the host immune response. This chain is Effector CFEM8, found in Marssonina brunnea f. sp. multigermtubi (strain MB_m1) (Marssonina leaf spot fungus).